Reading from the N-terminus, the 479-residue chain is MAQHTVYFPDAFLTQMREAMPSTLSFDDFLAACQRPLRRSIRVNTLKISVADFLQLTAPYGWTLTPIPWCEEGFWIERDNEDALPLGSTAEHLSGLFYIQEASSMLPVAALFADGNAPQRVMDVAAAPGSKTTQISARMNNEGAILANEFSASRVKVLHANISRCGISNVALTHFDGRVFGAAVPEMFDAILLDAPCSGEGVVRKDPDALKNWSPESNQEIAATQRELIDSAFHALRPGGTLVYSTCTLNQEENEAVCLWLKETYPDAVEFLPLGDLFPGANKALTEEGFLHVFPQIYDCEGFFVARLRKTQAIPALPAPKYKVGNFPFSPVKDREAGQIRQAAAGVGLNWDENLRLWQRDKELWLFPVGIEALIGKVRFSRLGIKLAETHNKGYRWQHEAVIALATPDNVNAFELTPQEAEEWYRGRDVYPQAAPVADDVLVTFQHQPIGLAKRIGSRLKNSYPRELVRDGKLFTGNA.

S-adenosyl-L-methionine-binding positions include 125-131 (AAAPGSK), glutamate 149, aspartate 176, and aspartate 194. Cysteine 247 serves as the catalytic Nucleophile.

Belongs to the class I-like SAM-binding methyltransferase superfamily. RsmB/NOP family.

It is found in the cytoplasm. The enzyme catalyses cytidine(1407) in 16S rRNA + S-adenosyl-L-methionine = 5-methylcytidine(1407) in 16S rRNA + S-adenosyl-L-homocysteine + H(+). Specifically methylates the cytosine at position 1407 (m5C1407) of 16S rRNA. The sequence is that of Ribosomal RNA small subunit methyltransferase F from Shigella sonnei (strain Ss046).